The primary structure comprises 121 residues: Basic phospholipase A2 VRV-PL-VIIIa (121 aa).

7 disulfides stabilise this stretch: Cys26–Cys115, Cys28–Cys44, Cys43–Cys95, Cys49–Cys121, Cys50–Cys88, Cys57–Cys81, and Cys75–Cys86. Ca(2+) contacts are provided by Tyr27, Gly29, and Gly31. His47 is a catalytic residue. Residue Asp48 participates in Ca(2+) binding. Residue Asp89 is part of the active site.

The protein belongs to the phospholipase A2 family. Group II subfamily. D49 sub-subfamily. As to quaternary structure, monomer. Requires Ca(2+) as cofactor. In terms of tissue distribution, expressed by the venom gland.

It localises to the secreted. The catalysed reaction is a 1,2-diacyl-sn-glycero-3-phosphocholine + H2O = a 1-acyl-sn-glycero-3-phosphocholine + a fatty acid + H(+). Its activity is regulated as follows. Oxyphenbutazone (OPB), anisic acid and atropine inhibit the enzymatic activity by binding at the substrate-binding site. P-coumaric acid, resveratrol, spermidine, corticosterone and gramine derivative inhibit the enzymatic activity by binding at the substrate-binding site. Its function is as follows. Snake venom phospholipase A2 (PLA2) that shows weak neurotoxicity and medium anticoagulant effects by binding to factor Xa (F10) and inhibiting the prothrombinase activity (IC(50) is 130 nM). It also damages vital organs such as lung, liver and kidney, displays edema-inducing activities when injected into the foot pads of mice and induces necrosis of muscle cells when injected into the thigh muscle. Has a low enzymatic activity. PLA2 catalyzes the calcium-dependent hydrolysis of the 2-acyl groups in 3-sn-phosphoglycerides. This chain is Basic phospholipase A2 VRV-PL-VIIIa, found in Daboia russelii (Russel's viper).